We begin with the raw amino-acid sequence, 391 residues long: Phosphoglycerate kinase (391 aa).

Substrate is bound by residues 21-23, Arg-36, 59-62, Arg-113, and Arg-146; these read DLN and HLGR. ATP contacts are provided by residues Lys-197, Glu-319, and 345 to 348; that span reads GGDT.

The protein belongs to the phosphoglycerate kinase family. In terms of assembly, monomer.

The protein resides in the cytoplasm. It catalyses the reaction (2R)-3-phosphoglycerate + ATP = (2R)-3-phospho-glyceroyl phosphate + ADP. It functions in the pathway carbohydrate degradation; glycolysis; pyruvate from D-glyceraldehyde 3-phosphate: step 2/5. This is Phosphoglycerate kinase from Xanthomonas euvesicatoria pv. vesicatoria (strain 85-10) (Xanthomonas campestris pv. vesicatoria).